A 213-amino-acid chain; its full sequence is uncharacterized protein (213 aa).

A compositionally biased stretch (basic and acidic residues) spans 1-11; sequence MFATKDPEFEN. Disordered stretches follow at residues 1–21 and 63–98; these read MFATKDPEFENRINTNKSPRN and LRNKAPKNEETKHEEHTPDNHEETDHHEAKQQEQAW. Polar residues predominate over residues 12–21; the sequence is RINTNKSPRN. A compositionally biased stretch (basic and acidic residues) spans 63–93; that stretch reads LRNKAPKNEETKHEEHTPDNHEETDHHEAKQ.

This is an uncharacterized protein from Escherichia coli (strain K12).